The following is a 116-amino-acid chain: NADH-ubiquinone oxidoreductase chain 3 (116 aa).

The next 3 helical transmembrane spans lie at 4–24, 56–76, and 88–108; these read LIIT…IAFW, FFLV…LLPL, and TLIL…YEWI.

This sequence belongs to the complex I subunit 3 family. Core subunit of respiratory chain NADH dehydrogenase (Complex I) which is composed of 45 different subunits. Interacts with TMEM186. Interacts with TMEM242.

It localises to the mitochondrion inner membrane. It carries out the reaction a ubiquinone + NADH + 5 H(+)(in) = a ubiquinol + NAD(+) + 4 H(+)(out). Core subunit of the mitochondrial membrane respiratory chain NADH dehydrogenase (Complex I) which catalyzes electron transfer from NADH through the respiratory chain, using ubiquinone as an electron acceptor. Essential for the catalytic activity of complex I. The sequence is that of NADH-ubiquinone oxidoreductase chain 3 from Didelphis virginiana (North American opossum).